Consider the following 311-residue polypeptide: tRNA dimethylallyltransferase (311 aa).

Position 12–19 (12–19) interacts with ATP; the sequence is GPTASGKT. Residue 14–19 participates in substrate binding; that stretch reads TASGKT. Interaction with substrate tRNA regions lie at residues 37–40 and 161–165; these read DSAM and QRIQR.

Belongs to the IPP transferase family. As to quaternary structure, monomer. Mg(2+) is required as a cofactor.

It catalyses the reaction adenosine(37) in tRNA + dimethylallyl diphosphate = N(6)-dimethylallyladenosine(37) in tRNA + diphosphate. Its function is as follows. Catalyzes the transfer of a dimethylallyl group onto the adenine at position 37 in tRNAs that read codons beginning with uridine, leading to the formation of N6-(dimethylallyl)adenosine (i(6)A). The polypeptide is tRNA dimethylallyltransferase (Coxiella burnetii (strain RSA 331 / Henzerling II)).